A 610-amino-acid polypeptide reads, in one-letter code: Probable indole-3-acetic acid-amido synthetase GH3.1 (610 aa).

The protein belongs to the IAA-amido conjugating enzyme family. In terms of tissue distribution, expressed in flowers.

Functionally, may catalyze the synthesis of indole-3-acetic acid (IAA)-amino acid conjugates, providing a mechanism for the plant to cope with the presence of excess auxin. This chain is Probable indole-3-acetic acid-amido synthetase GH3.1 (GH3.1), found in Oryza sativa subsp. japonica (Rice).